The chain runs to 643 residues: Threonine--tRNA ligase (643 aa).

In terms of domain architecture, TGS spans 1-61 (MPIITLPDGS…TEDSTLEIIT (61 aa)). Positions 243–534 (DHRKIGKALD…ITEEYAGFFP (292 aa)) are catalytic. The Zn(2+) site is built by C334, H385, and H511.

This sequence belongs to the class-II aminoacyl-tRNA synthetase family. As to quaternary structure, homodimer. It depends on Zn(2+) as a cofactor.

It localises to the cytoplasm. The enzyme catalyses tRNA(Thr) + L-threonine + ATP = L-threonyl-tRNA(Thr) + AMP + diphosphate + H(+). Functionally, catalyzes the attachment of threonine to tRNA(Thr) in a two-step reaction: L-threonine is first activated by ATP to form Thr-AMP and then transferred to the acceptor end of tRNA(Thr). Also edits incorrectly charged L-seryl-tRNA(Thr). The chain is Threonine--tRNA ligase from Mannheimia succiniciproducens (strain KCTC 0769BP / MBEL55E).